A 166-amino-acid polypeptide reads, in one-letter code: Alanine racemase (166 aa).

The Proton acceptor; specific for L-alanine role is filled by Y62. M110 is a binding site for substrate.

It belongs to the alanine racemase family. The cofactor is pyridoxal 5'-phosphate.

It catalyses the reaction L-alanine = D-alanine. It functions in the pathway amino-acid biosynthesis; D-alanine biosynthesis; D-alanine from L-alanine: step 1/1. Catalyzes the interconversion of L-alanine and D-alanine. May also act on other amino acids. This Piscirickettsia salmonis protein is Alanine racemase (alr).